Consider the following 508-residue polypeptide: Fc receptor-like protein 2 (508 aa).

Residues 1–19 (MLLWSLLVIFDAVTEQADS) form the signal peptide. 4 Ig-like C2-type domains span residues 20–98 (LTLV…SNIV), 109–187 (PVLT…HRIR), 201–290 (PISN…KVVN), and 300–387 (PVLT…VSIS). Topologically, residues 20-401 (LTLVAPSSVF…YRRDLMTAGV (382 aa)) are extracellular. Cysteines 128 and 177 form a disulfide. Asn-204, Asn-234, Asn-343, Asn-355, and Asn-365 each carry an N-linked (GlcNAc...) asparagine glycan. 2 cysteine pairs are disulfide-bonded: Cys-226/Cys-275 and Cys-321/Cys-368. The helical transmembrane segment at 402-422 (LWGLFGVLGFTGVALLLYALF) threads the bilayer. Topologically, residues 423–508 (HKISGESSAT…QVIYSSVKKS (86 aa)) are cytoplasmic. Positions 429–453 (SSATNEPRGASRPNPQEFTYSSPTP) are disordered. Over residues 441-452 (PNPQEFTYSSPT) the composition is skewed to polar residues. Short sequence motifs (ITIM motif) lie at residues 446 to 451 (FTYSSP), 460 to 465 (PVYVNV), 472 to 477 (VVYSQV), and 500 to 505 (VIYSSV).

In terms of assembly, the tyrosine-phosphorylated isoform 2 interacts with PTPN6. Isoform 2 is N- and O-glycosylated, and phosphorylated. As to expression, expressed in the secondary lymphoid organs, spleen and lymph node. Expression is limited to the mature B-cell lines. Highly expressed in CD19 and within the mantle zones of the tonsil tissue. Isoform 2 is expressed in the spleen, peripheral blood and bone marrow. Isoform 2 and isoform 4 are expressed in B-cell lines. Preferentially expressed in memory B-cells (at protein level).

The protein localises to the cell membrane. In terms of biological role, may have an regulatory role in normal and neoplastic B cell development. This is Fc receptor-like protein 2 (FCRL2) from Homo sapiens (Human).